A 73-amino-acid polypeptide reads, in one-letter code: UPF0337 protein lp_1708 (73 aa).

2 stretches are compositionally biased toward basic and acidic residues: residues 1-35 (MSDV…REAQ) and 44-73 (KAKD…KSDD). The disordered stretch occupies residues 1–73 (MSDVNKKFDS…KDKMKKKSDD (73 aa)).

This sequence belongs to the UPF0337 (CsbD) family.

This chain is UPF0337 protein lp_1708, found in Lactiplantibacillus plantarum (strain ATCC BAA-793 / NCIMB 8826 / WCFS1) (Lactobacillus plantarum).